A 175-amino-acid polypeptide reads, in one-letter code: ATP synthase subunit b (175 aa).

A helical transmembrane segment spans residues 22–42 (LNLLETNIINIAIVFGLLIFL).

This sequence belongs to the ATPase B chain family. In terms of assembly, F-type ATPases have 2 components, F(1) - the catalytic core - and F(0) - the membrane proton channel. F(1) has five subunits: alpha(3), beta(3), gamma(1), delta(1), epsilon(1). F(0) has four main subunits: a(1), b(1), b'(1) and c(10-14). The alpha and beta chains form an alternating ring which encloses part of the gamma chain. F(1) is attached to F(0) by a central stalk formed by the gamma and epsilon chains, while a peripheral stalk is formed by the delta, b and b' chains.

It is found in the cell inner membrane. Functionally, f(1)F(0) ATP synthase produces ATP from ADP in the presence of a proton or sodium gradient. F-type ATPases consist of two structural domains, F(1) containing the extramembraneous catalytic core and F(0) containing the membrane proton channel, linked together by a central stalk and a peripheral stalk. During catalysis, ATP synthesis in the catalytic domain of F(1) is coupled via a rotary mechanism of the central stalk subunits to proton translocation. Its function is as follows. Component of the F(0) channel, it forms part of the peripheral stalk, linking F(1) to F(0). This is ATP synthase subunit b from Gloeobacter violaceus (strain ATCC 29082 / PCC 7421).